The primary structure comprises 237 residues: (5-formylfuran-3-yl)methyl phosphate synthase (237 aa).

The active-site Schiff-base intermediate with substrate is the lysine 27. Lysine 85 acts as the Proton acceptor in catalysis.

The protein belongs to the MfnB family.

The catalysed reaction is 2 D-glyceraldehyde 3-phosphate = 4-(hydroxymethyl)-2-furancarboxaldehyde phosphate + phosphate + 2 H2O. Its pathway is cofactor biosynthesis; methanofuran biosynthesis. Catalyzes the formation of 4-(hydroxymethyl)-2-furancarboxaldehyde phosphate (4-HFC-P) from two molecules of glyceraldehyde-3-P (GA-3-P). In Methanobrevibacter smithii (strain ATCC 35061 / DSM 861 / OCM 144 / PS), this protein is (5-formylfuran-3-yl)methyl phosphate synthase.